A 434-amino-acid chain; its full sequence is Homogentisate 1,2-dioxygenase (434 aa).

His289 serves as the catalytic Proton acceptor. Residues His332 and Glu338 each coordinate Fe cation. Residues Tyr347 and His368 each contribute to the homogentisate site. His368 is a Fe cation binding site.

It belongs to the homogentisate dioxygenase family. In terms of assembly, hexamer; dimer of trimers. Fe cation is required as a cofactor.

The catalysed reaction is homogentisate + O2 = 4-maleylacetoacetate + H(+). The protein operates within amino-acid degradation; L-phenylalanine degradation; acetoacetate and fumarate from L-phenylalanine: step 4/6. Its function is as follows. Involved in the catabolism of homogentisate (2,5-dihydroxyphenylacetate or 2,5-OH-PhAc), a central intermediate in the degradation of phenylalanine and tyrosine. Catalyzes the oxidative ring cleavage of the aromatic ring of homogentisate to yield maleylacetoacetate. The sequence is that of Homogentisate 1,2-dioxygenase from Pseudomonas fluorescens (strain ATCC BAA-477 / NRRL B-23932 / Pf-5).